A 277-amino-acid chain; its full sequence is 5-formyltetrahydrofolate cyclo-ligase, mitochondrial (277 aa).

A mitochondrion-targeting transit peptide spans 1–48 (MIGARVFCITTTALRRSPIFFFPKIPTRPVFRLSPATRPIVAMSTTSK). 60–64 (KRVVR) lines the ATP pocket. Substrate-binding positions include Glu-113 and 207–211 (RGGGY). ATP is bound by residues 206–213 (GRGGGYYD) and Asp-254.

Belongs to the 5-formyltetrahydrofolate cyclo-ligase family. Monomer.

It is found in the mitochondrion. It catalyses the reaction (6S)-5-formyl-5,6,7,8-tetrahydrofolate + ATP = (6R)-5,10-methenyltetrahydrofolate + ADP + phosphate. Its function is as follows. Contributes to tetrahydrofolate metabolism and photorespiration through the regulation of serine hydroxymethyltransferase. Prefers the pentalutamyl to the monoglutamyl form of 5-formyltetrahydrofolate. In Arabidopsis thaliana (Mouse-ear cress), this protein is 5-formyltetrahydrofolate cyclo-ligase, mitochondrial (5FCL).